We begin with the raw amino-acid sequence, 314 residues long: R2-like ligand binding oxidase (314 aa).

3 residues coordinate Mn(2+): glutamate 68, glutamate 101, and histidine 104. The segment at residues 71 to 162 (VTEDIQPFMS…AAQVRASVTY (92 aa)) is a cross-link (3-(O4'-tyrosyl)-valine (Val-Tyr)). Glutamate 101 contributes to the Fe cation binding site. Positions 167, 202, and 205 each coordinate Fe cation.

This sequence belongs to the ribonucleoside diphosphate reductase small chain family. R2-like ligand binding oxidase subfamily. Homodimer. The cofactor is Fe cation. It depends on Mn(2+) as a cofactor.

In terms of biological role, probable oxidase that might be involved in lipid metabolism. This is R2-like ligand binding oxidase from Mycobacterium bovis (strain ATCC BAA-935 / AF2122/97).